Consider the following 148-residue polypeptide: Snaclec 3 (148 aa).

A signal peptide spans 1–23; it reads WGDSSSSASACWSCSSPLSGTEA. 3 cysteine pairs are disulfide-bonded: cysteine 27/cysteine 38, cysteine 55/cysteine 144, and cysteine 121/cysteine 136. The 112-residue stretch at 34–145 folds into the C-type lectin domain; the sequence is YDQNCYKAFE…CSGTHSFVCK (112 aa).

Belongs to the snaclec family. As to quaternary structure, heterodimer; disulfide-linked. Expressed by the venom gland.

It localises to the secreted. In terms of biological role, interferes with one step of hemostasis (modulation of platelet aggregation, or coagulation cascade, for example). The chain is Snaclec 3 from Echis carinatus sochureki (Saw-scaled viper).